Here is a 340-residue protein sequence, read N- to C-terminus: Ferrochelatase (340 aa).

His-189 and Glu-292 together coordinate Fe cation.

This sequence belongs to the ferrochelatase family.

The protein localises to the cytoplasm. It carries out the reaction heme b + 2 H(+) = protoporphyrin IX + Fe(2+). The protein operates within porphyrin-containing compound metabolism; protoheme biosynthesis; protoheme from protoporphyrin-IX: step 1/1. Catalyzes the ferrous insertion into protoporphyrin IX. The polypeptide is Ferrochelatase (Pseudomonas fluorescens biotype C).